Reading from the N-terminus, the 317-residue chain is Ribosomal RNA small subunit methyltransferase H (317 aa).

S-adenosyl-L-methionine-binding positions include 39 to 41 (GGH), D59, F83, D104, and Q111.

Belongs to the methyltransferase superfamily. RsmH family.

It is found in the cytoplasm. It carries out the reaction cytidine(1402) in 16S rRNA + S-adenosyl-L-methionine = N(4)-methylcytidine(1402) in 16S rRNA + S-adenosyl-L-homocysteine + H(+). In terms of biological role, specifically methylates the N4 position of cytidine in position 1402 (C1402) of 16S rRNA. This Paraburkholderia phytofirmans (strain DSM 17436 / LMG 22146 / PsJN) (Burkholderia phytofirmans) protein is Ribosomal RNA small subunit methyltransferase H.